A 554-amino-acid polypeptide reads, in one-letter code: MEFPASVASLSANTVGSNDVLRRSVAYHPNIWGDFFLAHTSEFMEISIAEKEEHEWLKEEIKKLLVQTEYDSILKLELIDSIQRLGVSYHFEKEIDRILRYVHQTYPIYETENKDLRMLALRFRLLRQHGFHVPCDVFSEFIDAEGNLMESIAYDIQGILSLYEASNYGVLGEEILDKALDSCSSHLESLITDTNDDRLSRQVKEALKIPISKTLTRLGARKFISMYKEDDSHNEKLLKFAMLDFNMVQRLHQNELSHLTSWWKELDFANKLPFARDRLVECYFWIMGVYFEPRHEIARKILTKVIYMASVLDDTYDVYGTLDELILFTSVVRRWDISGIDELPTYMRIYLRALFDVYVEMEEEMGKIGKSYAVEYAKEEMKRLAEVYFQEAQWFFSKYKPTMQEYMKVALLSSGYMMMTINSLAVIEDPITKKEFDWVVSEPPILKSSSIITRLMDDLAGYGSEDKYSAVHLYMNEKGVSEEEAFQELRKQVKNSWKNRNKECLEPRSASVPILTTVVNFTRVVVVLYTDEDAYGNSKNKTKDMIKSILVDPV.

Mn(2+) is bound by residues Asp-313 and Asp-317. Residues 313 to 317 (DDTYD) carry the DDXXD motif motif. Homodimerization stretches follow at residues 319 to 325 (YGTLDEL) and 391 to 427 (EAQWFFSKYKPTMQEYMKVALLSSGYMMMTINSLAVI). Residues Asp-457 and Glu-465 each coordinate Mn(2+).

The protein belongs to the terpene synthase family. In terms of assembly, homodimer. It depends on Mn(2+) as a cofactor. The cofactor is Mg(2+). Expressed in peltate glandular trichomes. Present at low levels in flowers, leaves and stems.

The enzyme catalyses (2E,6E)-farnesyl diphosphate = (-)-(E)-beta-caryophyllene + diphosphate. It carries out the reaction (2E,6E)-farnesyl diphosphate = alpha-humulene + diphosphate. It participates in secondary metabolite biosynthesis; terpenoid biosynthesis. Involved in the biosynthesis of phenolic sesquiterpenes natural products. Sesquiterpene synthase converting (2E,6E)-farnesyl diphosphate (FPP) to (E)-beta-caryophyllene and alpha-humulene. In Origanum vulgare (Wild marjoram), this protein is (E)-beta-caryophyllene synthase.